A 306-amino-acid chain; its full sequence is D-alanine--D-alanine ligase (306 aa).

One can recognise an ATP-grasp domain in the interval 104 to 303 (KMLWKAFGLP…FEQLVVKILE (200 aa)). 134–189 (VAKLGLPLMVKPSLEGSSVGLTKVKAVEELKSAVEYALKFDNTILIEEWLAGDELT) lines the ATP pocket. Mg(2+)-binding residues include Asp-257, Glu-270, and Asn-272.

The protein belongs to the D-alanine--D-alanine ligase family. Mg(2+) is required as a cofactor. It depends on Mn(2+) as a cofactor.

The protein localises to the cytoplasm. It carries out the reaction 2 D-alanine + ATP = D-alanyl-D-alanine + ADP + phosphate + H(+). It participates in cell wall biogenesis; peptidoglycan biosynthesis. Cell wall formation. This chain is D-alanine--D-alanine ligase, found in Haemophilus influenzae (strain 86-028NP).